The primary structure comprises 88 residues: Large ribosomal subunit protein bL31B (88 aa).

The protein belongs to the bacterial ribosomal protein bL31 family. Type B subfamily. In terms of assembly, part of the 50S ribosomal subunit.

This Herminiimonas arsenicoxydans protein is Large ribosomal subunit protein bL31B.